A 1275-amino-acid polypeptide reads, in one-letter code: Inner capsid protein lambda-1 (1275 aa).

Residues 1-12 are compositionally biased toward basic residues; it reads MKRIPRKTKGKS. The disordered stretch occupies residues 1 to 149; the sequence is MKRIPRKTKG…DNEGGSNQKP (149 aa). Basic and acidic residues-rich tracts occupy residues 18-35 and 75-117; these read DSTE…DKQN and NNDE…DKSK. A compositionally biased stretch (polar residues) spans 118–149; that stretch reads AQVTYSDTGINNANELSRSGNVDNEGGSNQKP. A C2H2-type zinc finger spans residues 181-203; it reads YQCHVCSAVLFSPLDLDAHVASH.

Belongs to the turreted BTV-fold inner capsid family. Homodecamer; each decamer is made up of two conformers of VP2, called VP2A and VP2B. 12 homodecamers assemble to form an icosahedral capsid. Interacts with protein mu-NS; in viral inclusions. Requires Mg(2+) as cofactor. Mn(2+) serves as cofactor.

The protein localises to the virion. It catalyses the reaction ATP + H2O = ADP + phosphate + H(+). Functionally, inner capsid protein that self-assembles to form an icosahedral capsid with a T=2 symmetry, which consists of 120 copies of VP2, with channels at each of its five-fold vertices. This capsid constitutes the innermost concentric layer of the viral mature particle. In terms of biological role, displays NTPase, RNA 5'-triphosphatase (RTPase) and RNA helicase activities and probably participates in transcription of the viral genome. Helicase activity might be involved in unwinding or reannealing dsRNA during RNA synthesis. RTPase enzymatic activity represents the first step in RNA capping, which yields a 5'-diphosphorylated plus-strand RNA. The sequence is that of Inner capsid protein lambda-1 (L3) from Reovirus type 1 (strain Lang) (T1L).